The primary structure comprises 817 residues: Leucine--tRNA ligase (817 aa).

The short motif at 51-61 (PYPSGDLHVGH) is the 'HIGH' region element. The 'KMSKS' region signature appears at 588 to 592 (RMSKS). Residue Lys591 coordinates ATP.

It belongs to the class-I aminoacyl-tRNA synthetase family.

Its subcellular location is the cytoplasm. The enzyme catalyses tRNA(Leu) + L-leucine + ATP = L-leucyl-tRNA(Leu) + AMP + diphosphate. This Rubrobacter xylanophilus (strain DSM 9941 / JCM 11954 / NBRC 16129 / PRD-1) protein is Leucine--tRNA ligase.